We begin with the raw amino-acid sequence, 188 residues long: Large ribosomal subunit protein eL18 (188 aa).

K119 participates in a covalent cross-link: Glycyl lysine isopeptide (Lys-Gly) (interchain with G-Cter in SUMO2). S130 is modified (phosphoserine). The interval 150 to 188 (RHFGKAPGTPHSHTKPYVRSKGRKFERARGRRASRGYKN) is disordered. The residue at position 158 (T158) is a Phosphothreonine. 2 stretches are compositionally biased toward basic residues: residues 161-171 (SHTKPYVRSKG) and 178-188 (RGRRASRGYKN). Residue K164 forms a Glycyl lysine isopeptide (Lys-Gly) (interchain with G-Cter in SUMO2) linkage.

Belongs to the eukaryotic ribosomal protein eL18 family. As to quaternary structure, component of the large ribosomal subunit.

The protein resides in the cytoplasm. The protein localises to the cytosol. It is found in the rough endoplasmic reticulum. Component of the large ribosomal subunit. The ribosome is a large ribonucleoprotein complex responsible for the synthesis of proteins in the cell. The chain is Large ribosomal subunit protein eL18 (RPL18) from Bos taurus (Bovine).